A 207-amino-acid chain; its full sequence is High frequency lysogenization protein HflD homolog (207 aa).

The protein belongs to the HflD family.

The protein resides in the cytoplasm. It is found in the cell inner membrane. The polypeptide is High frequency lysogenization protein HflD homolog (Pseudomonas fluorescens (strain SBW25)).